The following is a 288-amino-acid chain: Bifunctional protein FolD (288 aa).

Residues G166 to S168 and I232 contribute to the NADP(+) site.

It belongs to the tetrahydrofolate dehydrogenase/cyclohydrolase family. Homodimer.

The enzyme catalyses (6R)-5,10-methylene-5,6,7,8-tetrahydrofolate + NADP(+) = (6R)-5,10-methenyltetrahydrofolate + NADPH. It carries out the reaction (6R)-5,10-methenyltetrahydrofolate + H2O = (6R)-10-formyltetrahydrofolate + H(+). The protein operates within one-carbon metabolism; tetrahydrofolate interconversion. In terms of biological role, catalyzes the oxidation of 5,10-methylenetetrahydrofolate to 5,10-methenyltetrahydrofolate and then the hydrolysis of 5,10-methenyltetrahydrofolate to 10-formyltetrahydrofolate. The protein is Bifunctional protein FolD of Acidithiobacillus ferrooxidans (strain ATCC 23270 / DSM 14882 / CIP 104768 / NCIMB 8455) (Ferrobacillus ferrooxidans (strain ATCC 23270)).